The chain runs to 68 residues: Protein SlyX homolog (68 aa).

It belongs to the SlyX family.

This Brucella anthropi (strain ATCC 49188 / DSM 6882 / CCUG 24695 / JCM 21032 / LMG 3331 / NBRC 15819 / NCTC 12168 / Alc 37) (Ochrobactrum anthropi) protein is Protein SlyX homolog.